The chain runs to 1036 residues: Multidrug resistance protein MdtC (1036 aa).

10 helical membrane passes run 12-34 (VATT…LLPV), 336-353 (RALV…FLFL), 360-382 (LIPA…LCGF), 431-450 (VGFT…IPLL), 463-485 (FAIT…TPMM), 528-547 (WVLL…YINI), 853-875 (LFLI…ESYI), 895-917 (LELF…IGIV), 949-971 (LRFR…LVLS), and 986-1008 (IVGG…YLCF).

The protein belongs to the resistance-nodulation-cell division (RND) (TC 2.A.6) family. MdtC subfamily. As to quaternary structure, part of a tripartite efflux system composed of MdtA, MdtB and MdtC. MdtC forms a heteromultimer with MdtB.

It localises to the cell inner membrane. The polypeptide is Multidrug resistance protein MdtC (Photorhabdus laumondii subsp. laumondii (strain DSM 15139 / CIP 105565 / TT01) (Photorhabdus luminescens subsp. laumondii)).